The chain runs to 147 residues: MAAQRLGKRVLSKLQSPSRARGPGGSPGGLQKRHARVTVKYDRRELQRRLDVEKWIDGRLEELYRGREADMPDEVNIDELLELESEEERSRKIQGLLKSCTNPTENFVQELLVKLRGLHKQPGLRQPSPSGDGSLSPRQDRARTAPP.

Residues 1-11 (MAAQRLGKRVL) show a composition bias toward basic residues. The segment at 1-37 (MAAQRLGKRVLSKLQSPSRARGPGGSPGGLQKRHARV) is disordered. Serine 26 carries the phosphoserine modification. Positions 35–120 (ARVTVKYDRR…LLVKLRGLHK (86 aa)) are inhibitory. Phosphothreonine is present on threonine 38. The tract at residues 118 to 147 (LHKQPGLRQPSPSGDGSLSPRQDRARTAPP) is disordered. Polar residues predominate over residues 127–137 (PSPSGDGSLSP). Phosphoserine occurs at positions 128, 134, and 136. Residues 138–147 (RQDRARTAPP) are compositionally biased toward basic and acidic residues.

It belongs to the PP1 inhibitor family. Post-translationally, phosphorylation of Thr-38 induces a conformation change. In terms of tissue distribution, detected in aorta smooth muscle and bladder.

The protein localises to the cytoplasm. Inhibitor of PPP1CA. Has over 1000-fold higher inhibitory activity when phosphorylated, creating a molecular switch for regulating the phosphorylation status of PPP1CA substrates and smooth muscle contraction. In Sus scrofa (Pig), this protein is Protein phosphatase 1 regulatory subunit 14A (CPI17).